We begin with the raw amino-acid sequence, 330 residues long: Aspartate--ammonia ligase (330 aa).

It belongs to the class-II aminoacyl-tRNA synthetase family. AsnA subfamily.

It localises to the cytoplasm. It carries out the reaction L-aspartate + NH4(+) + ATP = L-asparagine + AMP + diphosphate + H(+). Its pathway is amino-acid biosynthesis; L-asparagine biosynthesis; L-asparagine from L-aspartate (ammonia route): step 1/1. The polypeptide is Aspartate--ammonia ligase (Glaesserella parasuis serovar 5 (strain SH0165) (Haemophilus parasuis)).